The sequence spans 156 residues: Small ribosomal subunit protein uS7 (156 aa).

This sequence belongs to the universal ribosomal protein uS7 family. Part of the 30S ribosomal subunit. Contacts proteins S9 and S11.

Functionally, one of the primary rRNA binding proteins, it binds directly to 16S rRNA where it nucleates assembly of the head domain of the 30S subunit. Is located at the subunit interface close to the decoding center, probably blocks exit of the E-site tRNA. In Colwellia psychrerythraea (strain 34H / ATCC BAA-681) (Vibrio psychroerythus), this protein is Small ribosomal subunit protein uS7.